Here is a 619-residue protein sequence, read N- to C-terminus: Translation initiation factor IF-2 (619 aa).

2 stretches are compositionally biased toward low complexity: residues 1–18 and 98–111; these read MTLN…TTPK and PPQL…LTKT. 2 disordered regions span residues 1-24 and 90-113; these read MTLN…KETD and SEPQ…KTKP. The 169-residue stretch at 121 to 289 folds into the tr-type G domain; sequence KKSPIVTIMG…ILLVSEIQNL (169 aa). Residues 130–137 form a G1 region; sequence GHVDHGKT. Position 130–137 (130–137) interacts with GTP; the sequence is GHVDHGKT. Positions 155–159 are G2; that stretch reads GITQH. Residues 176–179 form a G3 region; the sequence is DTPG. GTP-binding positions include 176 to 180 and 230 to 233; these read DTPGH and NKID. Residues 230–233 are G4; that stretch reads NKID. A G5 region spans residues 266–268; the sequence is SAL.

The protein belongs to the TRAFAC class translation factor GTPase superfamily. Classic translation factor GTPase family. IF-2 subfamily.

The protein resides in the cytoplasm. In terms of biological role, one of the essential components for the initiation of protein synthesis. Protects formylmethionyl-tRNA from spontaneous hydrolysis and promotes its binding to the 30S ribosomal subunits. Also involved in the hydrolysis of GTP during the formation of the 70S ribosomal complex. The sequence is that of Translation initiation factor IF-2 from Onion yellows phytoplasma (strain OY-M).